A 257-amino-acid polypeptide reads, in one-letter code: Zinc import ATP-binding protein ZnuC (257 aa).

Positions 6–221 constitute an ABC transporter domain; that stretch reads VRLEQITVAF…AFVETFGHQV (216 aa). 38–45 is an ATP binding site; that stretch reads GPNGAGKT.

This sequence belongs to the ABC transporter superfamily. Zinc importer (TC 3.A.1.15.5) family. In terms of assembly, the complex is composed of two ATP-binding proteins (ZnuC), two transmembrane proteins (ZnuB) and a solute-binding protein (ZnuA).

The protein localises to the cell inner membrane. The enzyme catalyses Zn(2+)(out) + ATP(in) + H2O(in) = Zn(2+)(in) + ADP(in) + phosphate(in) + H(+)(in). Functionally, part of the ABC transporter complex ZnuABC involved in zinc import. Responsible for energy coupling to the transport system. The sequence is that of Zinc import ATP-binding protein ZnuC from Marinobacter nauticus (strain ATCC 700491 / DSM 11845 / VT8) (Marinobacter aquaeolei).